The following is a 405-amino-acid chain: Glucose-1-phosphate adenylyltransferase 1 (405 aa).

Residues tyrosine 96, glycine 161, 176 to 177 (EK), and serine 194 each bind alpha-D-glucose 1-phosphate.

Belongs to the bacterial/plant glucose-1-phosphate adenylyltransferase family. In terms of assembly, homotetramer.

The enzyme catalyses alpha-D-glucose 1-phosphate + ATP + H(+) = ADP-alpha-D-glucose + diphosphate. It participates in glycan biosynthesis; glycogen biosynthesis. In terms of biological role, involved in the biosynthesis of ADP-glucose, a building block required for the elongation reactions to produce glycogen. Catalyzes the reaction between ATP and alpha-D-glucose 1-phosphate (G1P) to produce pyrophosphate and ADP-Glc. This chain is Glucose-1-phosphate adenylyltransferase 1, found in Vibrio vulnificus (strain YJ016).